Consider the following 208-residue polypeptide: Transmembrane protein 222 (208 aa).

The segment at 1 to 26 (MAEAEGSSLLLLPPPPPPPRMAEVEA) is disordered. Residues 1–55 (MAEAEGSSLLLLPPPPPPPRMAEVEAPTAAETDMKQYQGSGGVAMDVERSRFPYC) lie on the Extracellular side of the membrane. A helical membrane pass occupies residues 56–76 (VVWTPIPVLTWFFPIIGHMGI). At 77–164 (CTSTGVIRDF…MRYNNSTNWN (88 aa)) the chain is on the cytoplasmic side. Residues 165 to 185 (MVTLCFFCLLYGKYVSVGAFV) traverse the membrane as a helical segment. Lys-186 is a topological domain (extracellular). A helical membrane pass occupies residues 187 to 207 (TWLPFILLLGIILTVSLVFNL). Residue Arg-208 is a topological domain, cytoplasmic.

Widely expressed. The highest expression is observed in the brain.

It localises to the membrane. It is found in the cell projection. The protein localises to the dendrite. This chain is Transmembrane protein 222 (TMEM222), found in Homo sapiens (Human).